The chain runs to 332 residues: Adenine deaminase (332 aa).

Residues H14, H16, and H194 each coordinate Zn(2+). Catalysis depends on E197, which acts as the Proton donor. Zn(2+) is bound at residue D275. Position 276 (D276) interacts with substrate.

The protein belongs to the metallo-dependent hydrolases superfamily. Adenosine and AMP deaminases family. Adenine deaminase type 2 subfamily. Requires Zn(2+) as cofactor.

It catalyses the reaction adenine + H2O + H(+) = hypoxanthine + NH4(+). Catalyzes the hydrolytic deamination of adenine to hypoxanthine. Plays an important role in the purine salvage pathway and in nitrogen catabolism. This chain is Adenine deaminase, found in Psychrobacter cryohalolentis (strain ATCC BAA-1226 / DSM 17306 / VKM B-2378 / K5).